The chain runs to 251 residues: PF03932 family protein CutC (251 aa).

It belongs to the CutC family.

Its subcellular location is the cytoplasm. This Bacteroides fragilis (strain YCH46) protein is PF03932 family protein CutC.